The sequence spans 75 residues: Small ribosomal subunit protein bS18 (75 aa).

Belongs to the bacterial ribosomal protein bS18 family. As to quaternary structure, part of the 30S ribosomal subunit. Forms a tight heterodimer with protein bS6.

Binds as a heterodimer with protein bS6 to the central domain of the 16S rRNA, where it helps stabilize the platform of the 30S subunit. This Moorella thermoacetica (strain ATCC 39073 / JCM 9320) protein is Small ribosomal subunit protein bS18.